The sequence spans 150 residues: UPF0260 protein PputGB1_4117 (150 aa).

It belongs to the UPF0260 family.

This chain is UPF0260 protein PputGB1_4117, found in Pseudomonas putida (strain GB-1).